Here is a 229-residue protein sequence, read N- to C-terminus: Ribose-5-phosphate isomerase A (229 aa).

Substrate is bound by residues 28–31 (TGST), 85–88 (DGAD), and 98–101 (KGRG). Glu107 acts as the Proton acceptor in catalysis. Substrate is bound at residue Lys125.

It belongs to the ribose 5-phosphate isomerase family. In terms of assembly, homotetramer.

The catalysed reaction is aldehydo-D-ribose 5-phosphate = D-ribulose 5-phosphate. The protein operates within carbohydrate degradation; pentose phosphate pathway; D-ribose 5-phosphate from D-ribulose 5-phosphate (non-oxidative stage): step 1/1. Inhibited by D-4-phosphoerythronic acid. Functionally, involved in the first step of the non-oxidative branch of the pentose phosphate pathway. It catalyzes the reversible conversion of ribose-5-phosphate to ribulose 5-phosphate. This chain is Ribose-5-phosphate isomerase A, found in Pyrococcus horikoshii (strain ATCC 700860 / DSM 12428 / JCM 9974 / NBRC 100139 / OT-3).